Consider the following 493-residue polypeptide: NADH-quinone oxidoreductase subunit N (493 aa).

Helical transmembrane passes span 8-28 (ALLP…AIAI), 34-54 (LVFW…PHAS), 71-91 (GLFF…LCLA), 102-122 (EIFV…SSAH), 123-143 (LAMF…MIAY), 157-177 (YLML…MVYG), 200-220 (ALAG…LVPF), 232-252 (PTPV…ALLL), 266-286 (FLCV…LLAL), 294-314 (LLAY…VAAG), 325-345 (IAFY…AISA), 370-390 (AAVL…VGFV), 405-427 (WPLV…RVVL), and 443-463 (PAAG…GLFP). Residues 473 to 493 (VPQPPPTADSPQRLTATGGLP) are disordered.

Belongs to the complex I subunit 2 family. In terms of assembly, NDH-1 is composed of 14 different subunits. Subunits NuoA, H, J, K, L, M, N constitute the membrane sector of the complex.

It localises to the cell inner membrane. It carries out the reaction a quinone + NADH + 5 H(+)(in) = a quinol + NAD(+) + 4 H(+)(out). Functionally, NDH-1 shuttles electrons from NADH, via FMN and iron-sulfur (Fe-S) centers, to quinones in the respiratory chain. The immediate electron acceptor for the enzyme in this species is believed to be ubiquinone. Couples the redox reaction to proton translocation (for every two electrons transferred, four hydrogen ions are translocated across the cytoplasmic membrane), and thus conserves the redox energy in a proton gradient. The sequence is that of NADH-quinone oxidoreductase subunit N from Methylococcus capsulatus (strain ATCC 33009 / NCIMB 11132 / Bath).